We begin with the raw amino-acid sequence, 501 residues long: Pentatricopeptide repeat-containing protein At4g14190, chloroplastic (501 aa).

A chloroplast-targeting transit peptide spans 1–88 (MENLTTAQFL…SGSCPLRLLQ (88 aa)). PPR repeat units follow at residues 130 to 160 (SENN…MIDD), 166 to 200 (SLEI…GLLP), 201 to 235 (ITET…GCVR), 236 to 270 (DHVT…KMTL), and 271 to 305 (EPST…GISL).

Belongs to the PPR family. P subfamily.

It is found in the plastid. The protein localises to the chloroplast. This is Pentatricopeptide repeat-containing protein At4g14190, chloroplastic from Arabidopsis thaliana (Mouse-ear cress).